Here is a 97-residue protein sequence, read N- to C-terminus: MSRINKEEVKKVAQLARLELNINEINNHAEQLEKILDYIRQLEKIDTDNVPCTTRAIEVINVFRKDEKKNYDRTEELLELGPSREDKYFKVPKIMNE.

The protein belongs to the GatC family. In terms of assembly, heterotrimer of A, B and C subunits.

The catalysed reaction is L-glutamyl-tRNA(Gln) + L-glutamine + ATP + H2O = L-glutaminyl-tRNA(Gln) + L-glutamate + ADP + phosphate + H(+). It catalyses the reaction L-aspartyl-tRNA(Asn) + L-glutamine + ATP + H2O = L-asparaginyl-tRNA(Asn) + L-glutamate + ADP + phosphate + 2 H(+). Allows the formation of correctly charged Asn-tRNA(Asn) or Gln-tRNA(Gln) through the transamidation of misacylated Asp-tRNA(Asn) or Glu-tRNA(Gln) in organisms which lack either or both of asparaginyl-tRNA or glutaminyl-tRNA synthetases. The reaction takes place in the presence of glutamine and ATP through an activated phospho-Asp-tRNA(Asn) or phospho-Glu-tRNA(Gln). The protein is Aspartyl/glutamyl-tRNA(Asn/Gln) amidotransferase subunit C of Prochlorococcus marinus (strain MIT 9215).